A 148-amino-acid chain; its full sequence is Transcriptional regulator MraZ (148 aa).

2 SpoVT-AbrB domains span residues 5-51 (STQL…PQPV) and 80-123 (ACDV…DMAK).

The protein belongs to the MraZ family. As to quaternary structure, forms oligomers.

It is found in the cytoplasm. Its subcellular location is the nucleoid. The protein is Transcriptional regulator MraZ of Nitrosomonas eutropha (strain DSM 101675 / C91 / Nm57).